Here is a 141-residue protein sequence, read N- to C-terminus: MPPKFKRHLNDDDVTGSVKSERRNLLEDDSDEEEDFFLRGPSGPRFGPRNDKIKHVQNQVDEVIDVMQENITKVIERGERLDELQDKSESLSDNATAFSNRSKQLRRQMWWRGCKIKAIMALAAAILLLMIIILIVVKFRT.

Positions 1-51 are disordered; sequence MPPKFKRHLNDDDVTGSVKSERRNLLEDDSDEEEDFFLRGPSGPRFGPRND. Residues 1–118 lie on the Cytoplasmic side of the membrane; the sequence is MPPKFKRHLN…MWWRGCKIKA (118 aa). 2 positions are modified to phosphoserine: Ser-17 and Ser-30. A v-SNARE coiled-coil homology domain is found at 52-112; sequence KIKHVQNQVD…KQLRRQMWWR (61 aa). A helical; Anchor for type IV membrane protein transmembrane segment spans residues 119–139; that stretch reads IMALAAAILLLMIIILIVVKF. The Vesicular segment spans residues 140 to 141; it reads RT.

Belongs to the synaptobrevin family. Identified in a complex containing STX6, STX12, VAMP4 and VTI1A. Interacts with BAIAP3; this interaction is increased in the presence of calcium. Post-translationally, (Microbial infection) Targeted and hydrolyzed by C.botulinum neurotoxin type X (BoNT/X) which hydrolyzes the 87-Arg-|-Ser-88 bond and probably inhibits neurotransmitter release. It remains unknown whether BoNT/X is ever produced, or what organisms it targets.

Its subcellular location is the golgi apparatus. The protein localises to the trans-Golgi network membrane. In terms of biological role, involved in the pathway that functions to remove an inhibitor (probably synaptotagmin-4) of calcium-triggered exocytosis during the maturation of secretory granules. May be a marker for this sorting pathway that is critical for remodeling the secretory response of granule. The protein is Vesicle-associated membrane protein 4 (Vamp4) of Mus musculus (Mouse).